A 237-amino-acid chain; its full sequence is 1-(5-phosphoribosyl)-5-[(5-phosphoribosylamino)methylideneamino] imidazole-4-carboxamide isomerase (237 aa).

The active-site Proton acceptor is aspartate 8. Aspartate 129 acts as the Proton donor in catalysis.

It belongs to the HisA/HisF family.

The protein localises to the cytoplasm. It carries out the reaction 1-(5-phospho-beta-D-ribosyl)-5-[(5-phospho-beta-D-ribosylamino)methylideneamino]imidazole-4-carboxamide = 5-[(5-phospho-1-deoxy-D-ribulos-1-ylimino)methylamino]-1-(5-phospho-beta-D-ribosyl)imidazole-4-carboxamide. It participates in amino-acid biosynthesis; L-histidine biosynthesis; L-histidine from 5-phospho-alpha-D-ribose 1-diphosphate: step 4/9. The chain is 1-(5-phosphoribosyl)-5-[(5-phosphoribosylamino)methylideneamino] imidazole-4-carboxamide isomerase from Acetivibrio thermocellus (strain ATCC 27405 / DSM 1237 / JCM 9322 / NBRC 103400 / NCIMB 10682 / NRRL B-4536 / VPI 7372) (Clostridium thermocellum).